Reading from the N-terminus, the 349-residue chain is Heat-inducible transcription repressor HrcA (349 aa).

This sequence belongs to the HrcA family.

Its function is as follows. Negative regulator of class I heat shock genes (grpE-dnaK-dnaJ and groELS operons). Prevents heat-shock induction of these operons. This chain is Heat-inducible transcription repressor HrcA, found in Xylella fastidiosa (strain M23).